Consider the following 591-residue polypeptide: Aspartate--tRNA ligase (591 aa).

Residue Glu171 coordinates L-aspartate. The tract at residues 195-198 is aspartate; it reads QLFK. Residue Arg217 participates in L-aspartate binding. ATP is bound by residues 217–219 and Gln226; that span reads RDE. His448 serves as a coordination point for L-aspartate. Glu482 contributes to the ATP binding site. Position 489 (Arg489) interacts with L-aspartate. Residue 534–537 coordinates ATP; sequence GLDR.

This sequence belongs to the class-II aminoacyl-tRNA synthetase family. Type 1 subfamily. As to quaternary structure, homodimer.

It localises to the cytoplasm. The enzyme catalyses tRNA(Asp) + L-aspartate + ATP = L-aspartyl-tRNA(Asp) + AMP + diphosphate. Its function is as follows. Catalyzes the attachment of L-aspartate to tRNA(Asp) in a two-step reaction: L-aspartate is first activated by ATP to form Asp-AMP and then transferred to the acceptor end of tRNA(Asp). The protein is Aspartate--tRNA ligase of Aliivibrio fischeri (strain MJ11) (Vibrio fischeri).